The sequence spans 193 residues: SCO1 protein homolog (193 aa).

Positions M1–A18 are cleaved as a signal peptide. The N-palmitoyl cysteine moiety is linked to residue C19. A lipid anchor (S-diacylglycerol cysteine) is attached at C19. In terms of domain architecture, Thioredoxin spans D26–T191. Cu cation is bound by residues C64, C68, and H154.

It belongs to the SCO1/2 family. In terms of assembly, monomer.

It localises to the cell membrane. Its function is as follows. Necessary for insertion of copper into the active site of cytochrome c oxidase. May play a role in copper homeostasis or redox signaling. This is SCO1 protein homolog (ypmQ) from Bacillus subtilis (strain 168).